A 70-amino-acid chain; its full sequence is Adenylate kinase (70 aa).

10-15 (GAGKGT) is an ATP binding site. Residues 30-59 (STGDLFRANISKQTELGKLAKSYMDKGELV) form an NMP region. AMP contacts are provided by residues Thr-31, Arg-36, and 57-59 (ELV).

Belongs to the adenylate kinase family. In terms of assembly, monomer.

The protein localises to the cytoplasm. It carries out the reaction AMP + ATP = 2 ADP. It participates in purine metabolism; AMP biosynthesis via salvage pathway; AMP from ADP: step 1/1. Catalyzes the reversible transfer of the terminal phosphate group between ATP and AMP. Plays an important role in cellular energy homeostasis and in adenine nucleotide metabolism. This Streptomyces scabiei protein is Adenylate kinase (adk).